We begin with the raw amino-acid sequence, 311 residues long: Aspartate carbamoyltransferase catalytic subunit (311 aa).

Carbamoyl phosphate-binding residues include arginine 59 and threonine 60. Lysine 87 contacts L-aspartate. Residues arginine 109, histidine 139, and glutamine 142 each contribute to the carbamoyl phosphate site. Arginine 172 and arginine 224 together coordinate L-aspartate. 2 residues coordinate carbamoyl phosphate: alanine 265 and proline 266.

The protein belongs to the aspartate/ornithine carbamoyltransferase superfamily. ATCase family. In terms of assembly, heterododecamer (2C3:3R2) of six catalytic PyrB chains organized as two trimers (C3), and six regulatory PyrI chains organized as three dimers (R2).

It carries out the reaction carbamoyl phosphate + L-aspartate = N-carbamoyl-L-aspartate + phosphate + H(+). It functions in the pathway pyrimidine metabolism; UMP biosynthesis via de novo pathway; (S)-dihydroorotate from bicarbonate: step 2/3. Functionally, catalyzes the condensation of carbamoyl phosphate and aspartate to form carbamoyl aspartate and inorganic phosphate, the committed step in the de novo pyrimidine nucleotide biosynthesis pathway. The chain is Aspartate carbamoyltransferase catalytic subunit from Streptococcus equi subsp. zooepidemicus (strain MGCS10565).